The following is an 880-amino-acid chain: Alanine--tRNA ligase (880 aa).

Positions 567, 571, 669, and 673 each coordinate Zn(2+).

This sequence belongs to the class-II aminoacyl-tRNA synthetase family. Requires Zn(2+) as cofactor.

The protein resides in the cytoplasm. The catalysed reaction is tRNA(Ala) + L-alanine + ATP = L-alanyl-tRNA(Ala) + AMP + diphosphate. Catalyzes the attachment of alanine to tRNA(Ala) in a two-step reaction: alanine is first activated by ATP to form Ala-AMP and then transferred to the acceptor end of tRNA(Ala). Also edits incorrectly charged Ser-tRNA(Ala) and Gly-tRNA(Ala) via its editing domain. The sequence is that of Alanine--tRNA ligase from Bacillus thuringiensis subsp. konkukian (strain 97-27).